A 281-amino-acid polypeptide reads, in one-letter code: NAD kinase (281 aa).

Catalysis depends on aspartate 61, which acts as the Proton acceptor. NAD(+)-binding positions include 61-62 (DG), 134-135 (ND), arginine 145, aspartate 164, 175-180 (TAYSLS), and glutamine 234.

This sequence belongs to the NAD kinase family. A divalent metal cation is required as a cofactor.

The protein resides in the cytoplasm. The catalysed reaction is NAD(+) + ATP = ADP + NADP(+) + H(+). In terms of biological role, involved in the regulation of the intracellular balance of NAD and NADP, and is a key enzyme in the biosynthesis of NADP. Catalyzes specifically the phosphorylation on 2'-hydroxyl of the adenosine moiety of NAD to yield NADP. This Clostridium botulinum (strain Loch Maree / Type A3) protein is NAD kinase.